The primary structure comprises 238 residues: Small ribosomal subunit protein eS4 (238 aa).

One can recognise an S4 RNA-binding domain in the interval 38–101 (LPLALIIRDV…GEVYRVVPDA (64 aa)).

Belongs to the eukaryotic ribosomal protein eS4 family.

This is Small ribosomal subunit protein eS4 from Pyrobaculum aerophilum (strain ATCC 51768 / DSM 7523 / JCM 9630 / CIP 104966 / NBRC 100827 / IM2).